We begin with the raw amino-acid sequence, 244 residues long: 3-oxoacyl-[acyl-carrier-protein] reductase FabG (244 aa).

NADP(+) contacts are provided by residues 12–15 (GANQ) and threonine 37. Residues lysine 50 and glycine 53 each coordinate Ca(2+). NADP(+) is bound by residues 59 to 60 (DL) and asparagine 86. Serine 138 contacts substrate. Residue asparagine 145 participates in Ca(2+) binding. Tyrosine 151 serves as the catalytic Proton acceptor. NADP(+) contacts are provided by residues 151 to 155 (YSASK) and isoleucine 184. Ca(2+) contacts are provided by glutamine 233 and threonine 234.

The protein belongs to the short-chain dehydrogenases/reductases (SDR) family. Homotetramer.

It catalyses the reaction a (3R)-hydroxyacyl-[ACP] + NADP(+) = a 3-oxoacyl-[ACP] + NADPH + H(+). It participates in lipid metabolism; fatty acid biosynthesis. Functionally, catalyzes the NADPH-dependent reduction of beta-ketoacyl-ACP substrates to beta-hydroxyacyl-ACP products, the first reductive step in the elongation cycle of fatty acid biosynthesis. The polypeptide is 3-oxoacyl-[acyl-carrier-protein] reductase FabG (fabG) (Buchnera aphidicola subsp. Schizaphis graminum (strain Sg)).